The chain runs to 390 residues: Protein-glutamate methylesterase/protein-glutamine glutaminase (390 aa).

The 118-residue stretch at 4 to 121 (RALVVDDSGF…SGDMEQVKRQ (118 aa)) folds into the Response regulatory domain. Asp-55 carries the 4-aspartylphosphate modification. Residues 130–198 (GGGRGAPAGR…AAPAPERGQR (69 aa)) form a disordered region. Composition is skewed to low complexity over residues 136–148 (PAGR…APVD) and 179–193 (EAPV…APAP). Positions 201-390 (PGALRLVVIG…QVGEELAKLR (190 aa)) constitute a CheB-type methylesterase domain. Active-site residues include Ser-212, His-239, and Asp-335.

Belongs to the CheB family. Post-translationally, phosphorylated by CheA. Phosphorylation of the N-terminal regulatory domain activates the methylesterase activity.

The protein localises to the cytoplasm. The catalysed reaction is [protein]-L-glutamate 5-O-methyl ester + H2O = L-glutamyl-[protein] + methanol + H(+). The enzyme catalyses L-glutaminyl-[protein] + H2O = L-glutamyl-[protein] + NH4(+). In terms of biological role, involved in chemotaxis. Part of a chemotaxis signal transduction system that modulates chemotaxis in response to various stimuli. Catalyzes the demethylation of specific methylglutamate residues introduced into the chemoreceptors (methyl-accepting chemotaxis proteins or MCP) by CheR. Also mediates the irreversible deamidation of specific glutamine residues to glutamic acid. The chain is Protein-glutamate methylesterase/protein-glutamine glutaminase from Alkalilimnicola ehrlichii (strain ATCC BAA-1101 / DSM 17681 / MLHE-1).